The primary structure comprises 160 residues: MITLYEAAIKTLITHRKQILKHPDSREILLALGLYWDKTHILVKCRECGKMSLTGKHSTKCININCLLILAIKKKNKRMVDTLIRMGADVTYIHLLKNKIKLSYNQLSMLKSNSQISLKELHAICYLLYGRLPKKIKQGMQLCKTMAGLCGELLCAFLAP.

It belongs to the asfivirus MGF 300 family.

Plays a role in virus cell tropism, and may be required for efficient virus replication in macrophages. The protein is Protein MGF 300-2R of African swine fever virus (isolate Tick/South Africa/Pretoriuskop Pr4/1996) (ASFV).